A 141-amino-acid chain; its full sequence is Hemoglobin subunit alpha-D (141 aa).

Residues 1 to 141 enclose the Globin domain; that stretch reads MLGAEETALV…VAAVLAEKYR (141 aa). Positions 58 and 87 each coordinate heme b.

The protein belongs to the globin family. Heterotetramer of two alpha-D chains and two beta chains. As to expression, red blood cells.

Functionally, involved in oxygen transport from the lung to the various peripheral tissues. The sequence is that of Hemoglobin subunit alpha-D (HBAD) from Phalacrocorax carbo (Great cormorant).